A 117-amino-acid chain; its full sequence is MRVKRGQAAHKRHKKFLKMAKGYVGARSKLYETAREVAERSLVYAYRDRKQRKRQMRKLWILRINAAARENGLSYSVFMHGLTVAGVELDRKVLADMAVREKDSFQKLAELVKSKVA.

It belongs to the bacterial ribosomal protein bL20 family.

In terms of biological role, binds directly to 23S ribosomal RNA and is necessary for the in vitro assembly process of the 50S ribosomal subunit. It is not involved in the protein synthesizing functions of that subunit. This Solidesulfovibrio magneticus (strain ATCC 700980 / DSM 13731 / RS-1) (Desulfovibrio magneticus) protein is Large ribosomal subunit protein bL20.